The chain runs to 255 residues: 3-deoxy-manno-octulosonate cytidylyltransferase (255 aa).

It belongs to the KdsB family.

It is found in the cytoplasm. It carries out the reaction 3-deoxy-alpha-D-manno-oct-2-ulosonate + CTP = CMP-3-deoxy-beta-D-manno-octulosonate + diphosphate. The protein operates within nucleotide-sugar biosynthesis; CMP-3-deoxy-D-manno-octulosonate biosynthesis; CMP-3-deoxy-D-manno-octulosonate from 3-deoxy-D-manno-octulosonate and CTP: step 1/1. It participates in bacterial outer membrane biogenesis; lipopolysaccharide biosynthesis. In terms of biological role, activates KDO (a required 8-carbon sugar) for incorporation into bacterial lipopolysaccharide in Gram-negative bacteria. This is 3-deoxy-manno-octulosonate cytidylyltransferase from Cellvibrio japonicus (strain Ueda107) (Pseudomonas fluorescens subsp. cellulosa).